The sequence spans 134 residues: Agouti-related protein (134 aa).

The signal sequence occupies residues 1-20; the sequence is MLTAVLLSCALLLAMPPLQG. Positions 21-84 are excised as a propeptide; the sequence is AQMGPAPLEG…VLDPEGRKPR (64 aa). 5 disulfide bridges follow: C89–C104, C96–C110, C103–C121, C107–C131, and C112–C119. The Agouti domain maps to 89–131; it reads CVRLHESCLGHQVPCCDPCATCYCRFFNAFCYCRKLGTTTNPC. The segment at 113 to 115 is interaction with melanocortin receptors; the sequence is RFF.

As to quaternary structure, interacts with melanocortin receptors MC3R, MC4R and MC5R.

It is found in the secreted. It localises to the golgi apparatus lumen. Plays a role in weight homeostasis. Involved in the control of feeding behavior through the central melanocortin system. Acts as alpha melanocyte-stimulating hormone antagonist by inhibiting cAMP production mediated by stimulation of melanocortin receptors within the hypothalamus and adrenal gland. Has very low activity with MC5R. Is an inverse agonist for MC3R and MC4R being able to suppress their constitutive activity. It promotes MC3R and MC4R endocytosis in an arrestin-dependent manner. This is Agouti-related protein (AGRP) from Bos taurus (Bovine).